A 342-amino-acid polypeptide reads, in one-letter code: Dual-specificity RNA methyltransferase RlmN (342 aa).

Glu92 acts as the Proton acceptor in catalysis. The 232-residue stretch at Asp98 to Glu329 folds into the Radical SAM core domain. Cys105 and Cys334 are joined by a disulfide. Cys112, Cys116, and Cys119 together coordinate [4Fe-4S] cluster. Residues Gly161–Glu162, Ser193, Ser215–His217, and Asn291 each bind S-adenosyl-L-methionine. Catalysis depends on Cys334, which acts as the S-methylcysteine intermediate.

The protein belongs to the radical SAM superfamily. RlmN family. Requires [4Fe-4S] cluster as cofactor.

It is found in the cytoplasm. It carries out the reaction adenosine(2503) in 23S rRNA + 2 reduced [2Fe-2S]-[ferredoxin] + 2 S-adenosyl-L-methionine = 2-methyladenosine(2503) in 23S rRNA + 5'-deoxyadenosine + L-methionine + 2 oxidized [2Fe-2S]-[ferredoxin] + S-adenosyl-L-homocysteine. It catalyses the reaction adenosine(37) in tRNA + 2 reduced [2Fe-2S]-[ferredoxin] + 2 S-adenosyl-L-methionine = 2-methyladenosine(37) in tRNA + 5'-deoxyadenosine + L-methionine + 2 oxidized [2Fe-2S]-[ferredoxin] + S-adenosyl-L-homocysteine. Its function is as follows. Specifically methylates position 2 of adenine 2503 in 23S rRNA and position 2 of adenine 37 in tRNAs. m2A2503 modification seems to play a crucial role in the proofreading step occurring at the peptidyl transferase center and thus would serve to optimize ribosomal fidelity. This is Dual-specificity RNA methyltransferase RlmN from Syntrophobacter fumaroxidans (strain DSM 10017 / MPOB).